Reading from the N-terminus, the 121-residue chain is Large ribosomal subunit protein uL18 (121 aa).

Positions 63–88 (AAIRPDPSPKKSQKQPPKTHKRYNLK) are disordered. Residues 73-87 (KSQKQPPKTHKRYNL) show a composition bias toward basic residues.

Belongs to the universal ribosomal protein uL18 family. In terms of assembly, component of the large ribosomal subunit (LSU).

The protein resides in the cytoplasm. Its subcellular location is the nucleus. Functionally, component of the ribosome, a large ribonucleoprotein complex responsible for the synthesis of proteins in the cell. The small ribosomal subunit (SSU) binds messenger RNAs (mRNAs) and translates the encoded message by selecting cognate aminoacyl-transfer RNA (tRNA) molecules. The large subunit (LSU) contains the ribosomal catalytic site termed the peptidyl transferase center (PTC), which catalyzes the formation of peptide bonds, thereby polymerizing the amino acids delivered by tRNAs into a polypeptide chain. The nascent polypeptides leave the ribosome through a tunnel in the LSU and interact with protein factors that function in enzymatic processing, targeting, and the membrane insertion of nascent chains at the exit of the ribosomal tunnel. This is Large ribosomal subunit protein uL18 (RPL5) from Solanum melongena (Eggplant).